The chain runs to 291 residues: Malolactic fermentation system transcriptional activator (291 aa).

Residues 1–60 (MSLNLRDLEYFYQLSKLRSFTNVAKHFRVSQPTISYAIKRLETYYDCDLFYKDSSHQVVD) form the HTH lysR-type domain. Positions 20 to 39 (FTNVAKHFRVSQPTISYAIK) form a DNA-binding region, H-T-H motif.

It belongs to the LysR transcriptional regulatory family.

It localises to the cytoplasm. Functionally, required for malolactic fermentation. It is most probably a transcriptional activator. The sequence is that of Malolactic fermentation system transcriptional activator (mleR) from Lactococcus lactis subsp. lactis (strain IL1403) (Streptococcus lactis).